The sequence spans 512 residues: Nuclear fusion protein FUS1 (512 aa).

Residues Ile-72–Leu-96 traverse the membrane as a helical segment. A hydrophilic region spans residues Lys-97–Asp-512. Thr-178 carries the post-translational modification Phosphothreonine. Phosphoserine is present on residues Ser-190 and Ser-256. A phosphothreonine mark is found at Thr-281 and Thr-424. The 77-residue stretch at Gln-436–Asp-512 folds into the SH3 domain.

In terms of processing, O-glycosylated.

Its subcellular location is the membrane. Required for cell fusion. Negatively regulates Sho1p signaling to ensure efficient cell fusion. Functionally, interacts with SHO1. The chain is Nuclear fusion protein FUS1 (FUS1) from Saccharomyces cerevisiae (strain ATCC 204508 / S288c) (Baker's yeast).